We begin with the raw amino-acid sequence, 367 residues long: 5-amino-6-(D-ribitylamino)uracil--L-tyrosine 4-hydroxyphenyl transferase (367 aa).

One can recognise a Radical SAM core domain in the interval 54–288; that stretch reads ITYIENWNIN…VYAISRLMFR (235 aa). 3 residues coordinate [4Fe-4S] cluster: C68, C72, and C75.

It belongs to the radical SAM superfamily. CofH family. Consists of two subunits, CofG and CofH. [4Fe-4S] cluster is required as a cofactor.

It catalyses the reaction 5-amino-6-(D-ribitylamino)uracil + L-tyrosine + S-adenosyl-L-methionine = 5-amino-5-(4-hydroxybenzyl)-6-(D-ribitylimino)-5,6-dihydrouracil + 2-iminoacetate + 5'-deoxyadenosine + L-methionine + H(+). It participates in cofactor biosynthesis; coenzyme F0 biosynthesis. Functionally, catalyzes the radical-mediated synthesis of 5-amino-5-(4-hydroxybenzyl)-6-(D-ribitylimino)-5,6-dihydrouracil from 5-amino-6-(D-ribitylamino)uracil and L-tyrosine. This Methanothermobacter thermautotrophicus (strain ATCC 29096 / DSM 1053 / JCM 10044 / NBRC 100330 / Delta H) (Methanobacterium thermoautotrophicum) protein is 5-amino-6-(D-ribitylamino)uracil--L-tyrosine 4-hydroxyphenyl transferase.